A 122-amino-acid polypeptide reads, in one-letter code: Large ribosomal subunit protein uL14 (122 aa).

The protein belongs to the universal ribosomal protein uL14 family. As to quaternary structure, part of the 50S ribosomal subunit. Forms a cluster with proteins L3 and L19. In the 70S ribosome, L14 and L19 interact and together make contacts with the 16S rRNA in bridges B5 and B8.

Its function is as follows. Binds to 23S rRNA. Forms part of two intersubunit bridges in the 70S ribosome. The protein is Large ribosomal subunit protein uL14 of Rickettsia rickettsii (strain Iowa).